The chain runs to 406 residues: Phosphopentomutase (406 aa).

Positions 10, 305, 310, 346, 347, and 358 each coordinate Mn(2+).

This sequence belongs to the phosphopentomutase family. Requires Mn(2+) as cofactor.

The protein localises to the cytoplasm. It carries out the reaction 2-deoxy-alpha-D-ribose 1-phosphate = 2-deoxy-D-ribose 5-phosphate. The catalysed reaction is alpha-D-ribose 1-phosphate = D-ribose 5-phosphate. Its pathway is carbohydrate degradation; 2-deoxy-D-ribose 1-phosphate degradation; D-glyceraldehyde 3-phosphate and acetaldehyde from 2-deoxy-alpha-D-ribose 1-phosphate: step 1/2. In terms of biological role, isomerase that catalyzes the conversion of deoxy-ribose 1-phosphate (dRib-1-P) and ribose 1-phosphate (Rib-1-P) to deoxy-ribose 5-phosphate (dRib-5-P) and ribose 5-phosphate (Rib-5-P), respectively. The chain is Phosphopentomutase from Agrobacterium fabrum (strain C58 / ATCC 33970) (Agrobacterium tumefaciens (strain C58)).